The chain runs to 452 residues: uncharacterized protein (452 aa).

The interval 1 to 452 is disordered; the sequence is MTAVSSNRNP…LRKPEADTAL (452 aa). Composition is skewed to polar residues over residues 29–41, 95–111, 129–144, and 163–176; these read RTGT…VSSN, SPQT…SNRN, SPQT…SSNR, and SPQT…AVSS. Residues 177–193 are compositionally biased toward basic and acidic residues; it reads NRDHEDDGCLLKQESRG. Composition is skewed to polar residues over residues 197–212, 231–245, 265–280, 299–314, 333–347, 376–394, and 412–426; these read SPQT…SSNR, SPQT…VSSN, SPQT…VSSK, and TAVS…SNRN. Basic and acidic residues predominate over residues 439–452; the sequence is EPQELRKPEADTAL.

This is an uncharacterized protein from Homo sapiens (Human).